The following is a 212-amino-acid chain: MKILVTAFDPFGGEKINPALEAVKQLENTIGEHTISKLEIPTVFHESKDVIDKELANGNYDVVLSIGQAGGRYDLTPERVGINIDDARIPDNKGNQPIDVAIQEDGAPAYFSNLPVKTMTEAIKAAGVPASLSNTAGTFVCNHVLYQLGYLADKSYPGLLFGFIHVPFIPEQVTDKPEKPSMSIETIAKGLTAAIKAISKEDDAKVALGETH.

Residues glutamate 78, cysteine 141, and histidine 165 contribute to the active site.

This sequence belongs to the peptidase C15 family. In terms of assembly, homotetramer.

The protein localises to the cytoplasm. It catalyses the reaction Release of an N-terminal pyroglutamyl group from a polypeptide, the second amino acid generally not being Pro.. In terms of biological role, removes 5-oxoproline from various penultimate amino acid residues except L-proline. This is Pyrrolidone-carboxylate peptidase from Staphylococcus haemolyticus (strain JCSC1435).